The following is a 420-amino-acid chain: 3-isopropylmalate dehydratase large subunit (420 aa).

3 residues coordinate [4Fe-4S] cluster: Cys300, Cys360, and Cys363.

Belongs to the aconitase/IPM isomerase family. LeuC type 2 subfamily. In terms of assembly, heterodimer of LeuC and LeuD. Requires [4Fe-4S] cluster as cofactor.

The enzyme catalyses (2R,3S)-3-isopropylmalate = (2S)-2-isopropylmalate. Its pathway is amino-acid biosynthesis; L-leucine biosynthesis; L-leucine from 3-methyl-2-oxobutanoate: step 2/4. In terms of biological role, catalyzes the isomerization between 2-isopropylmalate and 3-isopropylmalate, via the formation of 2-isopropylmaleate. This chain is 3-isopropylmalate dehydratase large subunit, found in Heliobacterium modesticaldum (strain ATCC 51547 / Ice1).